The primary structure comprises 440 residues: MESQQLSNYPHISHGSACASVTSKEVHTNQDPLDVSASKIQEYDKASTKANSQQTTTPASSAVPENPHHASPQPASVPPPQNGPYPQQCMMTQNQANPSGWSFYGHPSMIPYTPYQMSPMYFPPGPQSQFPQYPSSVGTPLSTPSPESGNTFTDSSSADSDMTSTKKYVRPPPMLTSPNDFPNWVKTYIKFLQNSNLGGIIPTVNGKPVRPITDDELTFLYNAFQIFAPSQFLPTWVKDILSVDYTDIMKILSKSIEKMQSDTQEANDIVTLANLQYNGSTPADAFETKVTNIIDRLNNNGIHINNKVACQLIMRGLSGEYKFLRYTRHRHLNMTVAELFLDIHAIYEEQQGSRNSKPNYRRNPSDEKNDSRSYTNTTKPKVIARNPQKTNNSKSKTARAHNVSTSNNSPSTDNDSISKSTTEPIQLNNKHDLHLRPETY.

Polar residues-rich tracts occupy residues 1–10 (MESQQLSNYP), 48–60 (TKAN…TPAS), and 127–152 (QSQF…GNTF). Disordered regions lie at residues 1–93 (MESQ…MMTQ), 126–173 (PQSQ…RPPP), and 352–440 (GSRN…PETY). Low complexity predominate over residues 153-165 (TDSSSADSDMTST). Residues 299 to 401 (NNGIHINNKV…NSKSKTARAH (103 aa)) are RNA-binding. Low complexity predominate over residues 402 to 418 (NVSTSNNSPSTDNDSIS). Serine 416 is subject to Phosphoserine. Over residues 419–428 (KSTTEPIQLN) the composition is skewed to polar residues. Over residues 429–440 (NKHDLHLRPETY) the composition is skewed to basic and acidic residues.

As to quaternary structure, homotrimer.

It is found in the cytoplasm. Its function is as follows. Capsid protein (CA) is the structural component of the virus-like particle (VLP), forming the shell that encapsulates the retrotransposons dimeric RNA genome. The particles are assembled from trimer-clustered units and there are holes in the capsid shells that allow for the diffusion of macromolecules. CA also has nucleocapsid-like chaperone activity, promoting primer tRNA(i)-Met annealing to the multipartite primer-binding site (PBS), dimerization of Ty1 RNA and initiation of reverse transcription. The chain is Transposon Ty1-BR Gag polyprotein (TY1A-BR) from Saccharomyces cerevisiae (strain ATCC 204508 / S288c) (Baker's yeast).